The sequence spans 126 residues: Holo-[acyl-carrier-protein] synthase (126 aa).

Mg(2+) is bound by residues aspartate 9 and glutamate 58.

Belongs to the P-Pant transferase superfamily. AcpS family. Mg(2+) is required as a cofactor.

Its subcellular location is the cytoplasm. It catalyses the reaction apo-[ACP] + CoA = holo-[ACP] + adenosine 3',5'-bisphosphate + H(+). In terms of biological role, transfers the 4'-phosphopantetheine moiety from coenzyme A to a Ser of acyl-carrier-protein. The protein is Holo-[acyl-carrier-protein] synthase of Klebsiella pneumoniae (strain 342).